Reading from the N-terminus, the 218-residue chain is Urease accessory protein UreG (218 aa).

22–29 (GPVGSGKT) is a binding site for GTP.

It belongs to the SIMIBI class G3E GTPase family. UreG subfamily. Homodimer. UreD, UreF and UreG form a complex that acts as a GTP-hydrolysis-dependent molecular chaperone, activating the urease apoprotein by helping to assemble the nickel containing metallocenter of UreC. The UreE protein probably delivers the nickel.

It is found in the cytoplasm. Facilitates the functional incorporation of the urease nickel metallocenter. This process requires GTP hydrolysis, probably effectuated by UreG. This Polaromonas naphthalenivorans (strain CJ2) protein is Urease accessory protein UreG.